Here is a 145-residue protein sequence, read N- to C-terminus: Sporulation-specific cell division protein Francci3_3418 (145 aa).

Belongs to the SsgA family.

It localises to the cell septum. In terms of biological role, involved in sporulation-specific cell division. The polypeptide is Sporulation-specific cell division protein Francci3_3418 (Frankia casuarinae (strain DSM 45818 / CECT 9043 / HFP020203 / CcI3)).